A 418-amino-acid polypeptide reads, in one-letter code: Gamma-glutamyl phosphate reductase (418 aa).

The protein belongs to the gamma-glutamyl phosphate reductase family.

Its subcellular location is the cytoplasm. It carries out the reaction L-glutamate 5-semialdehyde + phosphate + NADP(+) = L-glutamyl 5-phosphate + NADPH + H(+). Its pathway is amino-acid biosynthesis; L-proline biosynthesis; L-glutamate 5-semialdehyde from L-glutamate: step 2/2. In terms of biological role, catalyzes the NADPH-dependent reduction of L-glutamate 5-phosphate into L-glutamate 5-semialdehyde and phosphate. The product spontaneously undergoes cyclization to form 1-pyrroline-5-carboxylate. The protein is Gamma-glutamyl phosphate reductase of Histophilus somni (strain 2336) (Haemophilus somnus).